The chain runs to 191 residues: Cdc42 homolog (191 aa).

10–17 contacts GTP; sequence GDGAVGKT. An Effector region motif is present at residues 32 to 40; sequence YVPTVFDNY. GTP-binding positions include 57 to 61 and 115 to 118; these read DTAGQ and TQID. Cys-188 carries the post-translational modification Cysteine methyl ester. Cys-188 carries S-geranylgeranyl cysteine lipidation. The propeptide at 189-191 is removed in mature form; sequence KFL.

Belongs to the small GTPase superfamily. Rho family. CDC42 subfamily.

It localises to the cell junction. Its subcellular location is the adherens junction. The protein localises to the cell membrane. The catalysed reaction is GTP + H2O = GDP + phosphate + H(+). Regulates mbt kinase activity and is also required to recruit mbt to adherens junctions. Together with mbt, regulates photoreceptor cell morphogenesis. This is Cdc42 homolog from Drosophila pseudoobscura pseudoobscura (Fruit fly).